We begin with the raw amino-acid sequence, 272 residues long: Undecaprenyl-diphosphatase (272 aa).

A run of 8 helical transmembrane segments spans residues Met-1 to Ile-21, Pro-38 to Phe-58, Val-84 to Phe-104, Phe-112 to Ala-132, Met-145 to Val-165, Pro-183 to Tyr-203, Gln-219 to Met-239, and Phe-250 to Ile-270.

The protein belongs to the UppP family.

The protein resides in the cell membrane. The enzyme catalyses di-trans,octa-cis-undecaprenyl diphosphate + H2O = di-trans,octa-cis-undecaprenyl phosphate + phosphate + H(+). Functionally, catalyzes the dephosphorylation of undecaprenyl diphosphate (UPP). Confers resistance to bacitracin. In Clavibacter michiganensis subsp. michiganensis (strain NCPPB 382), this protein is Undecaprenyl-diphosphatase.